A 357-amino-acid polypeptide reads, in one-letter code: O-methyltransferase 1, chloroplastic (357 aa).

The N-terminal 53 residues, 1–53 (MPVLPWLAAAATTPVRRSPPLPATPRALLRLPASSFPPWSNCAKSGLPPRGPF), are a transit peptide targeting the chloroplast. The interval 50–71 (RGPFATAADTPLGGSLPEPEEE) is disordered.

Belongs to the methyltransferase superfamily. LCMT family. In terms of tissue distribution, expressed in roots, leaf sheaths, flag leaves and panicles.

Its subcellular location is the plastid. It is found in the chloroplast. The catalysed reaction is N-acetylserotonin + S-adenosyl-L-methionine = melatonin + S-adenosyl-L-homocysteine + H(+). It functions in the pathway aromatic compound metabolism; melatonin biosynthesis; melatonin from serotonin: step 1/2. Involved in melatonin biosynthesis. Can function as acetylserotonin O-methyltransferase. Catalyzes the transfer of a methyl group onto N-acetylserotonin, producing melatonin (N-acetyl-5-methoxytryptamine). Involved in the regulation of jasmonate- and brassinosteroid-mediated plant growth and defense responses. The polypeptide is O-methyltransferase 1, chloroplastic (Oryza sativa subsp. japonica (Rice)).